Reading from the N-terminus, the 227-residue chain is UPF0173 metal-dependent hydrolase Bsph_4138 (227 aa).

This sequence belongs to the UPF0173 family.

The polypeptide is UPF0173 metal-dependent hydrolase Bsph_4138 (Lysinibacillus sphaericus (strain C3-41)).